The chain runs to 334 residues: Probable tRNA pseudouridine synthase B (334 aa).

The active-site Nucleophile is D82. Residues L250–M325 form the PUA domain.

The protein belongs to the pseudouridine synthase TruB family. Type 2 subfamily.

The enzyme catalyses uridine(55) in tRNA = pseudouridine(55) in tRNA. Its function is as follows. Could be responsible for synthesis of pseudouridine from uracil-55 in the psi GC loop of transfer RNAs. This is Probable tRNA pseudouridine synthase B from Thermococcus gammatolerans (strain DSM 15229 / JCM 11827 / EJ3).